A 96-amino-acid chain; its full sequence is Large ribosomal subunit protein eL21 (96 aa).

Residues 1–37 (MPSSNGPMTGTRDKLSNSPRERGMSPPQRAIQEYDEG) are disordered. Basic and acidic residues predominate over residues 11–23 (TRDKLSNSPRERG).

Belongs to the eukaryotic ribosomal protein eL21 family.

This chain is Large ribosomal subunit protein eL21, found in Haloquadratum walsbyi (strain DSM 16790 / HBSQ001).